Reading from the N-terminus, the 449-residue chain is Probable glucuronosyltransferase 47 A (449 aa).

At 1–31 the chain is on the cytoplasmic side; sequence MEHPLECADSCSLAMSWFCNKKCRGWGLMKR. The chain crosses the membrane as a helical; Signal-anchor for type II membrane protein span at residues 32–52; it reads TVVASGLRSVVLLLLFIYFVQ. Topologically, residues 53–449 are lumenal; that stretch reads DVTAEMGHQR…GDLYPWGNDL (397 aa). 2 N-linked (GlcNAc...) asparagine glycosylation sites follow: N172 and N433.

Belongs to the glycosyltransferase 47 family. As to expression, mostly expressed in newly formed or expanding tissues.

It localises to the golgi apparatus membrane. Functionally, involved in the synthesis of glucuronoxylan hemicellulose in secondary cell walls. In Physcomitrium patens (Spreading-leaved earth moss), this protein is Probable glucuronosyltransferase 47 A.